Consider the following 909-residue polypeptide: Zinc finger and BTB domain-containing protein 41 (909 aa).

Residues 88 to 152 (CDLLIIVEGK…LYTSEFFVYK (65 aa)) enclose the BTB domain. A C2H2-type 1 zinc finger spans residues 207 to 230 (HQCKFCSRHFCYKKSLENHLAKTH). A disordered region spans residues 252–344 (RSKRNRKCPV…PEAGDSVGNV (93 aa)). Residues 266–275 (TSDDEQESGD) are compositionally biased toward acidic residues. Residues 284–295 (NFDKEKSDRNDS) are compositionally biased toward basic and acidic residues. The segment covering 296 to 322 (EDPGSEYNAEEDELEEEMSDEYSDIEE) has biased composition (acidic residues). C2H2-type zinc fingers lie at residues 361-383 (LQCP…TRVH), 389-411 (FECD…RKKH), 422-445 (HKCP…KRFH), 463-485 (WKCD…MILH), 491-514 (FKCT…EKFH), 518-541 (FPCD…ECTH), 547-569 (WTCF…LRIH), 575-597 (HLCS…LRVH), 603-625 (YECD…KKIH), 631-654 (HQCE…KSVH), 668-690 (HQCD…FRTH), 696-718 (YKCQ…LVIH), and 724-747 (FNCQ…DHVH).

The protein localises to the nucleus. May be involved in transcriptional regulation. In Homo sapiens (Human), this protein is Zinc finger and BTB domain-containing protein 41 (ZBTB41).